Here is a 968-residue protein sequence, read N- to C-terminus: Alanine--tRNA ligase, cytoplasmic (968 aa).

Residues Arg-77, His-95, Trp-176, and 214–216 (IWN) contribute to the ATP site. L-alanine-binding residues include Asn-216 and Asp-239. Gly-243 contacts ATP. Residues His-606, His-610, Cys-724, and His-728 each coordinate Zn(2+).

It belongs to the class-II aminoacyl-tRNA synthetase family. Monomer. Zn(2+) serves as cofactor.

The protein resides in the cytoplasm. It carries out the reaction tRNA(Ala) + L-alanine + ATP = L-alanyl-tRNA(Ala) + AMP + diphosphate. Catalyzes the attachment of alanine to tRNA(Ala) in a two-step reaction: alanine is first activated by ATP to form Ala-AMP and then transferred to the acceptor end of tRNA(Ala). Also edits incorrectly charged tRNA(Ala) via its editing domain. In Caenorhabditis elegans, this protein is Alanine--tRNA ligase, cytoplasmic.